The following is a 302-amino-acid chain: Succinate--CoA ligase [ADP-forming] subunit alpha (302 aa).

Residues 17–20 (TGST), Lys-43, and 96–98 (ITE) each bind CoA. Tyr-159 provides a ligand contact to substrate. The active-site Tele-phosphohistidine intermediate is His-247.

This sequence belongs to the succinate/malate CoA ligase alpha subunit family. In terms of assembly, heterotetramer of two alpha and two beta subunits.

It catalyses the reaction succinate + ATP + CoA = succinyl-CoA + ADP + phosphate. The catalysed reaction is GTP + succinate + CoA = succinyl-CoA + GDP + phosphate. Its pathway is carbohydrate metabolism; tricarboxylic acid cycle; succinate from succinyl-CoA (ligase route): step 1/1. Its function is as follows. Succinyl-CoA synthetase functions in the citric acid cycle (TCA), coupling the hydrolysis of succinyl-CoA to the synthesis of either ATP or GTP and thus represents the only step of substrate-level phosphorylation in the TCA. The alpha subunit of the enzyme binds the substrates coenzyme A and phosphate, while succinate binding and nucleotide specificity is provided by the beta subunit. This chain is Succinate--CoA ligase [ADP-forming] subunit alpha, found in Staphylococcus aureus (strain MRSA252).